The primary structure comprises 255 residues: H-2 class II histocompatibility antigen, E-U alpha chain (255 aa).

An N-terminal signal peptide occupies residues 1 to 25 (MATIGALLLRFFFIAVLMSSQKSWA). The alpha-1 stretch occupies residues 26–109 (IKEEHTIIQA…KRSNNTPDAN (84 aa)). Residues 26–217 (IKEEHTIIQA…KTLLPETKEN (192 aa)) are Extracellular-facing. The tract at residues 110 to 203 (VAPEVTVLSR…GLEEPLRKHW (94 aa)) is alpha-2. Residues 112–204 (PEVTVLSRSP…LEEPLRKHWE (93 aa)) enclose the Ig-like C1-type domain. A disulfide bridge links Cys-132 with Cys-188. N-linked (GlcNAc...) asparagine glycosylation is present at Asn-143. The interval 204–216 (EFEEKTLLPETKE) is connecting peptide. The chain crosses the membrane as a helical span at residues 218–238 (VVCALGLFVGLVGIVVGIILI). The Cytoplasmic portion of the chain corresponds to 239–255 (MKGIKKRNVVERRQGAL).

Belongs to the MHC class II family.

The protein resides in the membrane. This is H-2 class II histocompatibility antigen, E-U alpha chain (H2-Ea) from Mus musculus (Mouse).